We begin with the raw amino-acid sequence, 194 residues long: Xanthine phosphoribosyltransferase (194 aa).

Xanthine-binding residues include leucine 20 and asparagine 27. 128–132 (ANGQA) is a 5-phospho-alpha-D-ribose 1-diphosphate binding site. Lysine 156 contributes to the xanthine binding site.

The protein belongs to the purine/pyrimidine phosphoribosyltransferase family. Xpt subfamily. Homodimer.

Its subcellular location is the cytoplasm. The enzyme catalyses XMP + diphosphate = xanthine + 5-phospho-alpha-D-ribose 1-diphosphate. It participates in purine metabolism; XMP biosynthesis via salvage pathway; XMP from xanthine: step 1/1. Functionally, converts the preformed base xanthine, a product of nucleic acid breakdown, to xanthosine 5'-monophosphate (XMP), so that it can be reused for RNA or DNA synthesis. The polypeptide is Xanthine phosphoribosyltransferase (xpt) (Bacillus subtilis (strain 168)).